Consider the following 134-residue polypeptide: Biopolymer transport protein exbD2 (134 aa).

Over 1–17 (MRLGRRTSKQEEAQIDL) the chain is Cytoplasmic. Residues 18-38 (TSMLDIVFIMLIFFIVTSSFV) form a helical membrane-spanning segment. Topologically, residues 39 to 134 (RESGVEVNRP…KSIALAAEKP (96 aa)) are periplasmic.

It belongs to the ExbD/TolR family. As to quaternary structure, the accessory proteins ExbB and ExbD seem to form a complex with TonB.

The protein resides in the cell inner membrane. Involved in the TonB-dependent energy-dependent transport of various receptor-bound substrates. The protein is Biopolymer transport protein exbD2 (exbD2) of Vibrio cholerae serotype O1 (strain ATCC 39315 / El Tor Inaba N16961).